Here is a 105-residue protein sequence, read N- to C-terminus: Insulin (105 aa).

The N-terminal stretch at 1-24 is a signal peptide; sequence MALWTRLVPLLALLALWAPAPAHA. Disulfide bonds link cysteine 31/cysteine 91, cysteine 43/cysteine 104, and cysteine 90/cysteine 95. The propeptide at 57-82 is c peptide; sequence EVEGPQVGALELAGGPGAGGLEGPPQ.

This sequence belongs to the insulin family. In terms of assembly, heterodimer of a B chain and an A chain linked by two disulfide bonds.

It is found in the secreted. In terms of biological role, insulin decreases blood glucose concentration. It increases cell permeability to monosaccharides, amino acids and fatty acids. It accelerates glycolysis, the pentose phosphate cycle, and glycogen synthesis in liver. The protein is Insulin (INS) of Ovis aries (Sheep).